The following is an 89-amino-acid chain: Small ribosomal subunit protein uS15 (89 aa).

Belongs to the universal ribosomal protein uS15 family. In terms of assembly, part of the 30S ribosomal subunit. Forms a bridge to the 50S subunit in the 70S ribosome, contacting the 23S rRNA.

In terms of biological role, one of the primary rRNA binding proteins, it binds directly to 16S rRNA where it helps nucleate assembly of the platform of the 30S subunit by binding and bridging several RNA helices of the 16S rRNA. Forms an intersubunit bridge (bridge B4) with the 23S rRNA of the 50S subunit in the ribosome. This is Small ribosomal subunit protein uS15 from Rhizobium rhizogenes (strain K84 / ATCC BAA-868) (Agrobacterium radiobacter).